The following is a 215-amino-acid chain: MKYQLTALEARVIGCLLEKQVTTPEQYPLSVNGVVTACNQKTNREPVMNLSESEVQEQLDNLVKRHYLRTVSGFGNRVTKYEQRFCNSEFGDLKLSAAEVALITTLLLRGAQTPGELRSRAARMYEFSDMAELESTLEQLANREDGPFVVRLAREPGKRESRYMHLFSGEVEDQPAVTDMSNAVDGDLQARVEALEIEVAELKQRLDSLLAHLGD.

Lys-80 is modified (N6-acetyllysine).

The protein belongs to the UPF0502 family.

This chain is UPF0502 protein YceH, found in Shigella boydii serotype 4 (strain Sb227).